The primary structure comprises 800 residues: Ion-translocating oxidoreductase complex subunit C (800 aa).

4Fe-4S ferredoxin-type domains follow at residues 367–398 (DEFS…QQLY) and 408–437 (KARG…VQYY). Residues Cys-378, Cys-381, Cys-384, Cys-388, Cys-417, Cys-420, Cys-423, and Cys-427 each contribute to the [4Fe-4S] cluster site. Low complexity-rich tracts occupy residues 536-553 (GATP…APAP), 571-583 (AKQA…PAAT), 599-617 (AAIA…APAA), 647-667 (AKQA…ADPA), and 675-690 (AAIA…KQAA). 3 disordered regions span residues 536–558 (GATP…DDPR), 571–631 (AKQA…QDDP), and 647–706 (AKQA…ENTD). Polar residues predominate over residues 693-705 (HATTEPVTVQENT).

It belongs to the 4Fe4S bacterial-type ferredoxin family. RnfC subfamily. In terms of assembly, the complex is composed of six subunits: RnfA, RnfB, RnfC, RnfD, RnfE and RnfG. Requires [4Fe-4S] cluster as cofactor.

The protein localises to the cell inner membrane. Its function is as follows. Part of a membrane-bound complex that couples electron transfer with translocation of ions across the membrane. The protein is Ion-translocating oxidoreductase complex subunit C of Edwardsiella ictaluri (strain 93-146).